The primary structure comprises 395 residues: Nickel and cobalt resistance protein CnrB (395 aa).

The helical transmembrane segment at 13–33 threads the bilayer; sequence MIAGVAAVAAAVGFGAAHLPV. Residues 35 to 55 form a disordered region; it reads EKSPASTQAPEAQKPQSAPVK. A compositionally biased stretch (polar residues) spans 37–50; it reads SPASTQAPEAQKPQ. The stretch at 140–193 forms a coiled coil; it reads AAERKVAQAKADLARKTYEREASLFQQGVTPRQEMEAAKAALDVAQAEALRAAT.

Belongs to the membrane fusion protein (MFP) (TC 8.A.1) family.

It is found in the cell inner membrane. The products of the genes cnrA, cnrB, and cnrC are likely to form a membrane-bound protein complex catalyzing an energy-dependent efflux of Ni(2+) and Co(2+). The mechanism of action of the CnrCBA complex may be that of a proton/cation antiporter. This chain is Nickel and cobalt resistance protein CnrB (cnrB), found in Cupriavidus metallidurans (strain ATCC 43123 / DSM 2839 / NBRC 102507 / CH34) (Ralstonia metallidurans).